A 65-amino-acid chain; its full sequence is Photosystem II reaction center protein J (65 aa).

The chain crosses the membrane as a helical span at residues 35-55 (LWLVATAGGTAVIFVLGIFFY).

This sequence belongs to the PsbJ family. PSII is composed of 1 copy each of membrane proteins PsbA, PsbB, PsbC, PsbD, PsbE, PsbF, PsbH, PsbI, PsbJ, PsbK, PsbL, PsbM, PsbT, PsbX, PsbY, Psb30/Ycf12, peripheral proteins PsbO, CyanoQ (PsbQ), PsbU, PsbV and a large number of cofactors. It forms dimeric complexes.

The protein resides in the cellular thylakoid membrane. Functionally, one of the components of the core complex of photosystem II (PSII). PSII is a light-driven water:plastoquinone oxidoreductase that uses light energy to abstract electrons from H(2)O, generating O(2) and a proton gradient subsequently used for ATP formation. It consists of a core antenna complex that captures photons, and an electron transfer chain that converts photonic excitation into a charge separation. The polypeptide is Photosystem II reaction center protein J (Prochlorococcus marinus (strain NATL1A)).